The chain runs to 164 residues: Cyclic pyranopterin monophosphate synthase (164 aa).

Residues 77–79 (LCH) and 115–116 (ME) contribute to the substrate site. Asp-130 is an active-site residue.

It belongs to the MoaC family. Homohexamer; trimer of dimers.

The catalysed reaction is (8S)-3',8-cyclo-7,8-dihydroguanosine 5'-triphosphate = cyclic pyranopterin phosphate + diphosphate. It participates in cofactor biosynthesis; molybdopterin biosynthesis. In terms of biological role, catalyzes the conversion of (8S)-3',8-cyclo-7,8-dihydroguanosine 5'-triphosphate to cyclic pyranopterin monophosphate (cPMP). In Sinorhizobium medicae (strain WSM419) (Ensifer medicae), this protein is Cyclic pyranopterin monophosphate synthase.